Reading from the N-terminus, the 497-residue chain is Cytochrome P450 2D6 (497 aa).

A substrate-binding site is contributed by aspartate 301. Position 443 (cysteine 443) interacts with heme.

It belongs to the cytochrome P450 family. The cofactor is heme.

It is found in the endoplasmic reticulum membrane. The protein localises to the microsome membrane. The enzyme catalyses (5Z,8Z,11Z,14Z)-eicosatetraenoate + reduced [NADPH--hemoprotein reductase] + O2 = (8R,9S)-epoxy-(5Z,11Z,14Z)-eicosatrienoate + oxidized [NADPH--hemoprotein reductase] + H2O + H(+). It catalyses the reaction (5Z,8Z,11Z,14Z)-eicosatetraenoate + reduced [NADPH--hemoprotein reductase] + O2 = (11R,12S)-epoxy-(5Z,8Z,14Z)-eicosatrienoate + oxidized [NADPH--hemoprotein reductase] + H2O + H(+). The catalysed reaction is (5Z,8Z,11Z,14Z)-eicosatetraenoate + reduced [NADPH--hemoprotein reductase] + O2 = (14S,15R)-epoxy-(5Z,8Z,11Z)-eicosatrienoate + oxidized [NADPH--hemoprotein reductase] + H2O + H(+). It carries out the reaction N-(5Z,8Z,11Z,14Z-eicosatetraenoyl)-ethanolamine + reduced [NADPH--hemoprotein reductase] + O2 = N-(8,9-epoxy-5Z,11Z,14Z-eicosatrienoyl)-ethanolamine + oxidized [NADPH--hemoprotein reductase] + H2O + H(+). The enzyme catalyses N-(5Z,8Z,11Z,14Z-eicosatetraenoyl)-ethanolamine + reduced [NADPH--hemoprotein reductase] + O2 = N-(11,12-epoxy-5Z,8Z,14Z-eicosatrienoyl)-ethanolamine + oxidized [NADPH--hemoprotein reductase] + H2O + H(+). It catalyses the reaction N-(5Z,8Z,11Z,14Z-eicosatetraenoyl)-ethanolamine + reduced [NADPH--hemoprotein reductase] + O2 = N-(14,15-epoxy-5Z,8Z,11Z-eicosatrienoyl)-ethanolamine + oxidized [NADPH--hemoprotein reductase] + H2O + H(+). The catalysed reaction is N-(5Z,8Z,11Z,14Z-eicosatetraenoyl)-ethanolamine + reduced [NADPH--hemoprotein reductase] + O2 = N-(20-hydroxy-5Z,8Z,11Z,14Z-eicosatetraenoyl)-ethanolamine + oxidized [NADPH--hemoprotein reductase] + H2O + H(+). It carries out the reaction (5Z,8Z,11Z,14Z,17Z)-eicosapentaenoate + reduced [NADPH--hemoprotein reductase] + O2 = (17S,18R)-epoxy-(5Z,8Z,11Z,14Z)-eicosatetraenoate + oxidized [NADPH--hemoprotein reductase] + H2O + H(+). The enzyme catalyses (4Z,7Z,10Z,13Z,16Z,19Z)-docosahexaenoate + reduced [NADPH--hemoprotein reductase] + O2 = (19R,20S)-epoxy-(4Z,7Z,10Z,13Z,16Z)-docosapentaenoate + oxidized [NADPH--hemoprotein reductase] + H2O + H(+). It catalyses the reaction (4Z,7Z,10Z,13Z,16Z,19Z)-docosahexaenoate + reduced [NADPH--hemoprotein reductase] + O2 = (19S,20R)-epoxy-(4Z,7Z,10Z,13Z,16Z)-docosapentaenoate + oxidized [NADPH--hemoprotein reductase] + H2O + H(+). The catalysed reaction is cholesterol + reduced [NADPH--hemoprotein reductase] + O2 = 25-hydroxycholesterol + oxidized [NADPH--hemoprotein reductase] + H2O + H(+). It carries out the reaction all-trans-retinol + reduced [NADPH--hemoprotein reductase] + O2 = all-trans-retinal + oxidized [NADPH--hemoprotein reductase] + 2 H2O + H(+). Its pathway is cofactor metabolism; retinol metabolism. The protein operates within lipid metabolism; fatty acid metabolism. It participates in steroid metabolism; cholesterol metabolism. A cytochrome P450 monooxygenase involved in the metabolism of fatty acids, steroids and retinoids. Mechanistically, uses molecular oxygen inserting one oxygen atom into a substrate, and reducing the second into a water molecule, with two electrons provided by NADPH via cytochrome P450 reductase (NADPH--hemoprotein reductase). Catalyzes the epoxidation of double bonds of polyunsaturated fatty acids (PUFA). Metabolizes endocannabinoid arachidonoylethanolamide (anandamide) to 20-hydroxyeicosatetraenoic acid ethanolamide (20-HETE-EA) and 8,9-, 11,12-, and 14,15-epoxyeicosatrienoic acid ethanolamides (EpETrE-EAs), potentially modulating endocannabinoid system signaling. Catalyzes the hydroxylation of carbon-hydrogen bonds. Metabolizes cholesterol toward 25-hydroxycholesterol, a physiological regulator of cellular cholesterol homeostasis. Catalyzes the oxidative transformations of all-trans retinol to all-trans retinal, a precursor for the active form all-trans-retinoic acid. Also involved in the oxidative metabolism of drugs such as antiarrhythmics, adrenoceptor antagonists, and tricyclic antidepressants. The protein is Cytochrome P450 2D6 of Homo sapiens (Human).